The sequence spans 256 residues: Cell division protein FtsQ (256 aa).

The Cytoplasmic portion of the chain corresponds to 1–23; sequence MIKAVKMNTSFDKEKVRKHLPGA. The helical transmembrane segment at 24-44 threads the bilayer; that stretch reads IFLSLVVITSLWLVISTISWM. The Periplasmic portion of the chain corresponds to 45–256; that stretch reads TDEDRLPLSH…SDDVENKEEN (212 aa). Positions 50–120 constitute a POTRA domain; sequence LPLSHMIIQG…ETIKVFVVEH (71 aa).

Belongs to the FtsQ/DivIB family. FtsQ subfamily. In terms of assembly, part of a complex composed of FtsB, FtsL and FtsQ.

It localises to the cell inner membrane. Functionally, essential cell division protein. May link together the upstream cell division proteins, which are predominantly cytoplasmic, with the downstream cell division proteins, which are predominantly periplasmic. May control correct divisome assembly. The polypeptide is Cell division protein FtsQ (Aliivibrio fischeri (strain ATCC 700601 / ES114) (Vibrio fischeri)).